The primary structure comprises 409 residues: Divalent metal cation transporter MntH (409 aa).

11 helical membrane passes run 19–39 (LSLMGPAFIAAIAYIDPGNFA), 46–66 (ATFGYTLLWVVVWANVMAMLV), 98–118 (WVQAEIIVMATDLAEFIGAAI), 122–142 (LLFGVTLLQGAVLTGIATFLI), 155–175 (LVIGGLLLFVAAAYIVELIFS), 196–216 (AVFLAAGVLGATIMPHVIYLH), 241–261 (IAMTIAGFVNLAMMATAAAAF), 290–310 (VFGLSLIAAGLSSTVVGTLAG), 320–340 (FYIPMWVRRIVTMLPSFIVIL), 348–368 (ILVMSQVLLSFGIALALVPLL), and 388–408 (ILGKLVVLIVVGLNAYLLISL).

The protein belongs to the NRAMP family.

It is found in the cell inner membrane. In terms of biological role, h(+)-stimulated, divalent metal cation uptake system. The sequence is that of Divalent metal cation transporter MntH from Yersinia pseudotuberculosis serotype O:1b (strain IP 31758).